A 233-amino-acid polypeptide reads, in one-letter code: Cilia- and flagella-associated protein 299 (233 aa).

Abundantly expressed in testis, specifically in spermatogonia and primary spermatocytes but not in secondary spermatocytes and spermatids.

It is found in the cytoplasm. It localises to the nucleus. May be involved in spermatogenesis. In Mus musculus (Mouse), this protein is Cilia- and flagella-associated protein 299.